We begin with the raw amino-acid sequence, 246 residues long: Fasciclin-like arabinogalactan protein 11 (246 aa).

The N-terminal stretch at 1 to 24 (MATSRTFIFSNLFIFFLVIATTYG) is a signal peptide. The 146-residue stretch at 34–179 (PTNITAILEK…LAVYQVDQVL (146 aa)) folds into the FAS1 domain. N36, N68, N141, and N150 each carry an N-linked (GlcNAc...) asparagine glycan. A disordered region spans residues 193–222 (PAPEKGGSVSKGSASGGDDGGDSTDSSDAE). A lipid anchor (GPI-anchor amidated serine) is attached at S219. A propeptide spans 220 to 246 (DAERTGFGFGIRITTVAAIAASSSLWI) (removed in mature form).

This sequence belongs to the fasciclin-like AGP family. Expressed in the sclerenchyma cells of inflorescence stems and siliques.

It is found in the cell membrane. In terms of biological role, may be a cell surface adhesion protein. This Arabidopsis thaliana (Mouse-ear cress) protein is Fasciclin-like arabinogalactan protein 11 (FLA11).